Reading from the N-terminus, the 605-residue chain is Protein DENND6A (605 aa).

Residues 1–20 (MALPGPAVFGPGSRGSLDEA) form a disordered region. The region spanning 60–239 (HCVCVVGFDL…KVRIPTCHDK (180 aa)) is the uDENN domain. Residue Ser-124 is modified to Phosphoserine. A cDENN domain is found at 265 to 390 (EVDLFRCFCP…VKVKKLKNLK (126 aa)). In terms of domain architecture, dDENN spans 392 to 525 (LDSKPGVYTS…KTRRKEMTQK (134 aa)). Lys-507 is modified (N6-methyllysine).

This sequence belongs to the DENND6 family.

It is found in the recycling endosome. Its subcellular location is the cytoplasm. Its function is as follows. Guanine nucleotide exchange factor (GEF) for RAB14. Component of an endocytic recycling pathway that is required for the control of ADAM10 transport, shedding of N-cadherin/CDH2 by ADAM9 or ADAM10 and regulation of cell-cell junctions. Required for RAB14 recruitment to recycling endosomes. The protein is Protein DENND6A (Dennd6a) of Mus musculus (Mouse).